Here is a 253-residue protein sequence, read N- to C-terminus: Large ribosomal subunit protein mL57 (253 aa).

The N-terminal 28 residues, 1-28 (MENSMMFISRSLRRPVTALNCNLQSVRT), are a transit peptide targeting the mitochondrion.

It belongs to the ribonuclease III family. Mitochondrion-specific ribosomal protein mL57 subfamily. Component of the mitochondrial large ribosomal subunit (mt-LSU). Mature yeast 74S mitochondrial ribosomes consist of a small (37S) and a large (54S) subunit. The 37S small subunit contains a 15S ribosomal RNA (15S mt-rRNA) and 34 different proteins. The 54S large subunit contains a 21S rRNA (21S mt-rRNA) and 46 different proteins. mL57 forms a heterodimer with mL44 and stabilizes rRNA expansion segments 1/2 at a membrane-facing protuberance close to the point of attachment of the ribosome to the translocon in the membrane.

It is found in the mitochondrion. Functionally, component of the mitochondrial ribosome (mitoribosome), a dedicated translation machinery responsible for the synthesis of mitochondrial genome-encoded proteins, including at least some of the essential transmembrane subunits of the mitochondrial respiratory chain. The mitoribosomes are attached to the mitochondrial inner membrane and translation products are cotranslationally integrated into the membrane. This chain is Large ribosomal subunit protein mL57 (MRPL15), found in Saccharomyces cerevisiae (strain ATCC 204508 / S288c) (Baker's yeast).